We begin with the raw amino-acid sequence, 22 residues long: Major outer membrane protein (22 aa).

This sequence belongs to the Gram-negative porin family. As to quaternary structure, disulfide bond interactions within and between MOMP molecules and other components form high molecular-weight oligomers.

Its subcellular location is the cell outer membrane. Its function is as follows. Structural rigidity of the outer membrane of elementary bodies and porin forming, permitting diffusion of solutes through the intracellular reticulate body membrane. In Avibacterium gallinarum (Pasteurella gallinarum), this protein is Major outer membrane protein (ompH).